We begin with the raw amino-acid sequence, 190 residues long: MSRRYTPLAWVLLALLGLGAAQDCGSIVSRGKWGALASKCSQRLRQPVRYVVVSHTAGSVCNTPASCQRQAQNVQYYHVRERGWCDVGYNFLIGEDGLVYEGRGWNTLGAHSGPTWNPIAIGISFMGNYMHRVPPASALRAAQSLLACGAARGYLTPNYEVKGHRDVQQTLSPGDELYKIIQQWPHYRRV.

A signal peptide spans 1–21 (MSRRYTPLAWVLLALLGLGAA). Residue Gln-22 is modified to Pyrrolidone carboxylic acid. 3 cysteine pairs are disulfide-bonded: Cys-24-Cys-148, Cys-40-Cys-85, and Cys-61-Cys-67. The N-acetylmuramoyl-L-alanine amidase domain occupies 46-174 (QPVRYVVVSH…RDVQQTLSPG (129 aa)).

This sequence belongs to the N-acetylmuramoyl-L-alanine amidase 2 family. As to quaternary structure, homodimer; disulfide-linked. In terms of tissue distribution, synthesized only in bone marrow. The mature protein is stored in the cytoplasmic granules of eosinophils and neutrophils but is absent from monocytes, lymphocytes, or platelets.

The protein resides in the secreted. Its subcellular location is the cytoplasmic granule. In terms of biological role, innate immunity protein that plays several important functions in antimicrobial and antitumor defense systems. Acts as a pattern receptor that binds to murein peptidoglycans (PGN) of Gram-positive bacteria and thus provides bactericidal activity. Forms an equimolar complex with heat shock protein HSPA1A and induces programmed cell death through apoptosis and necroptosis in tumor cell lines by activating the TNFR1 receptor on the target cell membrane. In addition, acts in complex with the Ca(2+)-binding protein S100A4 as a chemoattractant able to induce lymphocyte movement. Mechanistically, this complex acts as a ligand of the chemotactic receptors CCR5 and CXCR3 which are present on the cells of the immune system. Also promotes the activation of lymphocytes that become able to kill virus-infected cells as well as tumor cells by modulating the spectrum of their target-cell specificity. Induction of cytotoxicity on monocyte surface requires interaction with TREM1 receptor. The protein is Peptidoglycan recognition protein 1 (PGLYRP1) of Bos taurus (Bovine).